A 197-amino-acid polypeptide reads, in one-letter code: Protein shisa-4 (197 aa).

An N-terminal signal peptide occupies residues 1–27 (MPPAGPRGTAPLAAVVLLVLGAPLALA). At 28–87 (SEDCLWYLDRNGSWHPGFDCEFFTFCCGTCYQRYCCRDLTLLITERQQKHCLAFSPKTIA) the chain is on the extracellular side. Residues 88–108 (GIASAVILFVAVVATTICCFL) form a helical membrane-spanning segment. Residues 109-197 (CSCCYLYRRR…MPPQPSYPGA (89 aa)) are Cytoplasmic-facing.

Belongs to the shisa family.

The protein resides in the membrane. This is Protein shisa-4 (Shisa4) from Mus musculus (Mouse).